A 197-amino-acid chain; its full sequence is Class A basic helix-loop-helix protein 15 (197 aa).

Residues 1–12 (MKTKNRPPRRRT) are compositionally biased toward basic residues. 2 disordered regions span residues 1–82 (MKTK…ERER) and 175–197 (TEDQPQGHLQRYSTQIHSFREGS). 2 positions are modified to phosphothreonine: T12 and T25. A compositionally biased stretch (polar residues) spans 27–36 (DRSQSGSGAS). A compositionally biased stretch (basic and acidic residues) spans 65-82 (SRRENSVQRRLESNERER). Residues 72–124 (QRRLESNERERQRMHKLNNAFQALREVIPHVRADKKLSKIETLTLAKNYIKSL) form the bHLH domain.

As to quaternary structure, forms homodimers or heterodimers with TCF3 gene products E12 and E47. These dimers bind to the E-box site, however, heterodimer with MYOD1 does not bind target DNA. In terms of tissue distribution, expressed in liver, spleen and olfactory epithelium. Weaker expression is seen in skeletal muscle, cardiac muscle, eye and brain tissue.

Its subcellular location is the nucleus. In terms of biological role, plays a role in controlling the transcriptional activity of MyoD, ensuring that expanding myoblast populations remain undifferentiated. Repression may occur through muscle-specific E-box occupancy by homodimers. May also negatively regulate bHLH-mediated transcription through an N-terminal repressor domain. Serves as a key regulator of acinar cell function, stability, and identity. Also required for normal organelle localization in exocrine cells and for mitochondrial calcium ion transport. May function as a unique regulator of gene expression in several different embryonic and postnatal cell lineages. Binds to the E-box consensus sequence 5'-CANNTG-3'. In Rattus norvegicus (Rat), this protein is Class A basic helix-loop-helix protein 15 (Bhlha15).